Here is a 307-residue protein sequence, read N- to C-terminus: Probable GTP 3',8-cyclase (307 aa).

Residues 4–222 (ALGREVRSVR…RTFHSREVYR (219 aa)) enclose the Radical SAM core domain. R13 is a GTP binding site. [4Fe-4S] cluster is bound by residues C20 and C24. Y26 is an S-adenosyl-L-methionine binding site. C27 contributes to the [4Fe-4S] cluster binding site. K60 contacts GTP. S-adenosyl-L-methionine is bound by residues G64 and S112. Residue K150 participates in GTP binding. [4Fe-4S] cluster is bound by residues C240 and C243. Residue 245 to 247 (RIR) participates in GTP binding. C257 is a [4Fe-4S] cluster binding site.

The protein belongs to the radical SAM superfamily. MoaA family. It depends on [4Fe-4S] cluster as a cofactor.

It carries out the reaction GTP + AH2 + S-adenosyl-L-methionine = (8S)-3',8-cyclo-7,8-dihydroguanosine 5'-triphosphate + 5'-deoxyadenosine + L-methionine + A + H(+). It functions in the pathway cofactor biosynthesis; molybdopterin biosynthesis. In terms of biological role, catalyzes the cyclization of GTP to (8S)-3',8-cyclo-7,8-dihydroguanosine 5'-triphosphate. The protein is Probable GTP 3',8-cyclase of Methanopyrus kandleri (strain AV19 / DSM 6324 / JCM 9639 / NBRC 100938).